A 200-amino-acid chain; its full sequence is Holliday junction branch migration complex subunit RuvA (200 aa).

The domain I stretch occupies residues 1–64 (MFAYFRGKLT…EDLLQLYGFS (64 aa)). The segment at 65-143 (GEEERQLFRL…KLSPVSALAS (79 aa)) is domain II. Residues 144–154 (PARLSSTLLRD) form a flexible linker region. Residues 154 to 200 (DDAVNALVTLGFSRIIVQKAVVAILEQNPGLTVEEVIKAALVSIHNS) are domain III.

It belongs to the RuvA family. As to quaternary structure, homotetramer. Forms an RuvA(8)-RuvB(12)-Holliday junction (HJ) complex. HJ DNA is sandwiched between 2 RuvA tetramers; dsDNA enters through RuvA and exits via RuvB. An RuvB hexamer assembles on each DNA strand where it exits the tetramer. Each RuvB hexamer is contacted by two RuvA subunits (via domain III) on 2 adjacent RuvB subunits; this complex drives branch migration. In the full resolvosome a probable DNA-RuvA(4)-RuvB(12)-RuvC(2) complex forms which resolves the HJ.

The protein localises to the cytoplasm. In terms of biological role, the RuvA-RuvB-RuvC complex processes Holliday junction (HJ) DNA during genetic recombination and DNA repair, while the RuvA-RuvB complex plays an important role in the rescue of blocked DNA replication forks via replication fork reversal (RFR). RuvA specifically binds to HJ cruciform DNA, conferring on it an open structure. The RuvB hexamer acts as an ATP-dependent pump, pulling dsDNA into and through the RuvAB complex. HJ branch migration allows RuvC to scan DNA until it finds its consensus sequence, where it cleaves and resolves the cruciform DNA. The polypeptide is Holliday junction branch migration complex subunit RuvA (Pelodictyon phaeoclathratiforme (strain DSM 5477 / BU-1)).